Consider the following 41-residue polypeptide: Large ribosomal subunit protein bL36 (41 aa).

It belongs to the bacterial ribosomal protein bL36 family.

In Mesorhizobium japonicum (strain LMG 29417 / CECT 9101 / MAFF 303099) (Mesorhizobium loti (strain MAFF 303099)), this protein is Large ribosomal subunit protein bL36.